The sequence spans 160 residues: MTNLTLDVNIIDFPSIPVAMLPHRCSPELLNYSVAKFIMWRKETGLSPVNQSQTFGVAWDDPATTAPEAFRFDICGSVSEPIPDNRYGVSNGELTGGRYAVARHVGELDDISHTVWGIIRHWLPASGEKMRKAPILFHYTNLAEGVTEQRLETDVYVPLA.

In terms of biological role, represses expression of mcbR. The polypeptide is Probable transcriptional regulator YgiV (ygiV) (Escherichia coli (strain K12)).